The chain runs to 817 residues: Leucine--tRNA ligase (817 aa).

Positions proline 42–histidine 52 match the 'HIGH' region motif. Positions lysine 576–serine 580 match the 'KMSKS' region motif. Lysine 579 is a binding site for ATP.

This sequence belongs to the class-I aminoacyl-tRNA synthetase family.

It localises to the cytoplasm. The catalysed reaction is tRNA(Leu) + L-leucine + ATP = L-leucyl-tRNA(Leu) + AMP + diphosphate. This Thioalkalivibrio sulfidiphilus (strain HL-EbGR7) protein is Leucine--tRNA ligase.